Reading from the N-terminus, the 403-residue chain is Cytochrome P450-SU2 (403 aa).

The disordered stretch occupies residues 1 to 24; it reads MTTAERTAPPDALTVPASRAPGCP. Cysteine 352 contacts heme.

The protein belongs to the cytochrome P450 family. Heme serves as cofactor.

Metabolism of a number of sulfonylurea herbicides. This chain is Cytochrome P450-SU2 (cyp105B1), found in Streptomyces griseolus.